The sequence spans 269 residues: 4-hydroxy-tetrahydrodipicolinate reductase (269 aa).

NAD(+) contacts are provided by residues 8 to 13, 98 to 100, and 122 to 125; these read GVAGRM, GTT, and APNM. His156 functions as the Proton donor/acceptor in the catalytic mechanism. Residue His157 coordinates (S)-2,3,4,5-tetrahydrodipicolinate. Residue Lys160 is the Proton donor of the active site. (S)-2,3,4,5-tetrahydrodipicolinate is bound at residue 166-167; it reads GT.

It belongs to the DapB family.

Its subcellular location is the cytoplasm. The enzyme catalyses (S)-2,3,4,5-tetrahydrodipicolinate + NAD(+) + H2O = (2S,4S)-4-hydroxy-2,3,4,5-tetrahydrodipicolinate + NADH + H(+). It catalyses the reaction (S)-2,3,4,5-tetrahydrodipicolinate + NADP(+) + H2O = (2S,4S)-4-hydroxy-2,3,4,5-tetrahydrodipicolinate + NADPH + H(+). It functions in the pathway amino-acid biosynthesis; L-lysine biosynthesis via DAP pathway; (S)-tetrahydrodipicolinate from L-aspartate: step 4/4. Functionally, catalyzes the conversion of 4-hydroxy-tetrahydrodipicolinate (HTPA) to tetrahydrodipicolinate. In Chromohalobacter salexigens (strain ATCC BAA-138 / DSM 3043 / CIP 106854 / NCIMB 13768 / 1H11), this protein is 4-hydroxy-tetrahydrodipicolinate reductase.